We begin with the raw amino-acid sequence, 341 residues long: L-threonine 3-dehydrogenase (341 aa).

C38 provides a ligand contact to Zn(2+). Residues T40 and H43 each act as charge relay system in the active site. Zn(2+) is bound by residues H63, E64, C93, C96, C99, and C107. NAD(+) contacts are provided by residues I175, D195, R200, 262–264 (LGI), and 286–287 (IY).

It belongs to the zinc-containing alcohol dehydrogenase family. In terms of assembly, homotetramer. Zn(2+) serves as cofactor.

It localises to the cytoplasm. The enzyme catalyses L-threonine + NAD(+) = (2S)-2-amino-3-oxobutanoate + NADH + H(+). Its pathway is amino-acid degradation; L-threonine degradation via oxydo-reductase pathway; glycine from L-threonine: step 1/2. Its function is as follows. Catalyzes the NAD(+)-dependent oxidation of L-threonine to 2-amino-3-ketobutyrate. The protein is L-threonine 3-dehydrogenase of Escherichia coli (strain K12 / MC4100 / BW2952).